The following is a 220-amino-acid chain: Histone H1B (220 aa).

2 disordered regions span residues Met1–Ser45 and Gln99–Lys220. Low complexity predominate over residues Lys28 to Ser45. Residues Ser40–Lys113 enclose the H15 domain. Basic residues-rich tracts occupy residues Ala122 to Lys134, Lys141 to Lys151, Ser158 to Thr196, and Lys204 to Lys220.

The protein belongs to the histone H1/H5 family.

The protein resides in the nucleus. Its subcellular location is the chromosome. In terms of biological role, histones H1 are necessary for the condensation of nucleosome chains into higher-order structures. The protein is Histone H1B of Xenopus laevis (African clawed frog).